Reading from the N-terminus, the 308-residue chain is HPr kinase/phosphorylase (308 aa).

Active-site residues include His138 and Lys159. 153–160 (GESGLGKS) lines the ATP pocket. Ser160 provides a ligand contact to Mg(2+). Catalysis depends on Asp177, which acts as the Proton acceptor; for phosphorylation activity. Proton donor; for dephosphorylation activity. An important for the catalytic mechanism of both phosphorylation and dephosphorylation region spans residues 201 to 210 (LEVRGLGLLD). Glu202 is a Mg(2+) binding site. Residue Arg243 is part of the active site. Residues 264 to 269 (QVAAGR) form an important for the catalytic mechanism of dephosphorylation region.

This sequence belongs to the HPrK/P family. In terms of assembly, homohexamer. Mg(2+) serves as cofactor.

The catalysed reaction is [HPr protein]-L-serine + ATP = [HPr protein]-O-phospho-L-serine + ADP + H(+). It carries out the reaction [HPr protein]-O-phospho-L-serine + phosphate + H(+) = [HPr protein]-L-serine + diphosphate. Catalyzes the ATP- as well as the pyrophosphate-dependent phosphorylation of a specific serine residue in HPr, a phosphocarrier protein of the phosphoenolpyruvate-dependent sugar phosphotransferase system (PTS). HprK/P also catalyzes the pyrophosphate-producing, inorganic phosphate-dependent dephosphorylation (phosphorolysis) of seryl-phosphorylated HPr (P-Ser-HPr). This is HPr kinase/phosphorylase from Bordetella pertussis (strain Tohama I / ATCC BAA-589 / NCTC 13251).